Reading from the N-terminus, the 173-residue chain is NADH-ubiquinone oxidoreductase chain 6 (173 aa).

5 helical membrane passes run 1-21, 27-47, 48-68, 87-107, and 139-159; these read MTYFMLFLGLCFVLGGLGVAS, YGVVGLVLASVVGCGWLLSLG, VSFVSLVLFMVYLGGMLVVFV, VVGYGVSFIAVLVVGVVIGGL, and CGVGMFLVAGWGLLLTLFVVL.

It belongs to the complex I subunit 6 family.

The protein resides in the mitochondrion membrane. The enzyme catalyses a ubiquinone + NADH + 5 H(+)(in) = a ubiquinol + NAD(+) + 4 H(+)(out). In terms of biological role, core subunit of the mitochondrial membrane respiratory chain NADH dehydrogenase (Complex I) that is believed to belong to the minimal assembly required for catalysis. Complex I functions in the transfer of electrons from NADH to the respiratory chain. The immediate electron acceptor for the enzyme is believed to be ubiquinone. The protein is NADH-ubiquinone oxidoreductase chain 6 (MT-ND6) of Synthliboramphus hypoleucus (Guadalupe murrelet).